A 285-amino-acid polypeptide reads, in one-letter code: Sulfotransferase 2A2 (285 aa).

3'-phosphoadenylyl sulfate contacts are provided by lysine 44, serine 45, glycine 46, threonine 47, asparagine 48, and tryptophan 49. Residue histidine 99 is the Proton acceptor of the active site. 7 residues coordinate 3'-phosphoadenylyl sulfate: arginine 121, serine 129, tyrosine 184, serine 218, arginine 247, lysine 248, and glycine 249.

Belongs to the sulfotransferase 1 family. As to expression, detected in liver.

It localises to the cytoplasm. It carries out the reaction an alcohol + 3'-phosphoadenylyl sulfate = an alkyl sulfate + adenosine 3',5'-bisphosphate + H(+). Sulfotransferase that utilizes 3'-phospho-5'-adenylyl sulfate (PAPS) as sulfonate donor to catalyze the sulfate conjugation of a potential wide variety of acceptor molecules bearing a hydroxyl group. Sulfonation increases the water solubility of most compounds, and therefore their renal excretion, but it can also result in bioactivation to form active metabolites. The protein is Sulfotransferase 2A2 of Rattus norvegicus (Rat).